A 455-amino-acid chain; its full sequence is Kynurenine--oxoglutarate transaminase 3 (455 aa).

G71 lines the substrate pocket. K116 carries the N6-acetyllysine; alternate modification. K116 carries the post-translational modification N6-succinyllysine; alternate. Residue N218 participates in substrate binding. K280 bears the N6-(pyridoxal phosphate)lysine mark. Position 430 (R430) interacts with substrate.

It belongs to the class-I pyridoxal-phosphate-dependent aminotransferase family. As to quaternary structure, homodimer. Pyridoxal 5'-phosphate serves as cofactor.

The enzyme catalyses L-kynurenine + 2-oxoglutarate = kynurenate + L-glutamate + H2O. It carries out the reaction L-kynurenine + glyoxylate = kynurenate + glycine + H2O. It catalyses the reaction 3-hydroxy-L-kynurenine + glyoxylate = xanthurenate + glycine + H2O. The catalysed reaction is an S-substituted L-cysteine + H2O = a thiol + pyruvate + NH4(+). The protein operates within amino-acid degradation; L-kynurenine degradation; kynurenate from L-kynurenine: step 1/2. Its function is as follows. Catalyzes the irreversible transamination of the L-tryptophan metabolite L-kynurenine to form kynurenic acid (KA), an intermediate in the tryptophan catabolic pathway which is also a broad spectrum antagonist of the three ionotropic excitatory amino acid receptors among others. May catalyze the beta-elimination of S-conjugates and Se-conjugates of L-(seleno)cysteine, resulting in the cleavage of the C-S or C-Se bond. Has transaminase activity towards L-kynurenine, tryptophan, phenylalanine, serine, cysteine, methionine, histidine, glutamine and asparagine with glyoxylate as an amino group acceptor (in vitro). Has lower activity with 2-oxoglutarate as amino group acceptor (in vitro). This chain is Kynurenine--oxoglutarate transaminase 3, found in Bos taurus (Bovine).